The following is a 1530-amino-acid chain: Neurexin-1 (1530 aa).

Residues Met-1 to Gly-30 form the signal peptide. A Laminin G-like 1 domain is found at Leu-31–Gly-212. At Leu-31–Thr-1454 the chain is on the extracellular side. Asn-125 and Asn-190 each carry an N-linked (GlcNAc...) asparagine glycan. A disordered region spans residues Ser-199–Glu-221. Residues Gly-213 to Ser-256 enclose the EGF-like 1 domain. Intrachain disulfides connect Cys-228–Cys-243 and Cys-245–Cys-255. Laminin G-like domains follow at residues Ile-299–Cys-496 and Asp-503–Cys-695. Residues Asp-345, Leu-362, and Met-430 each coordinate Ca(2+). 5 cysteine pairs are disulfide-bonded: Cys-460-Cys-496, Cys-666-Cys-695, Cys-703-Cys-714, Cys-708-Cys-723, and Cys-725-Cys-735. The 38-residue stretch at Thr-699–Glu-736 folds into the EGF-like 2 domain. An O-linked (Glc...) serine glycan is attached at Ser-705. 2 consecutive Laminin G-like domains span residues Val-741 to Cys-914 and Asp-928 to Cys-1103. The Ca(2+) site is built by Asp-788 and Leu-805. Residue Asn-813 is glycosylated (N-linked (GlcNAc...) asparagine). Arg-864 lines the Ca(2+) pocket. 5 cysteine pairs are disulfide-bonded: Cys-906/Cys-914, Cys-1075/Cys-1103, Cys-1110/Cys-1121, Cys-1115/Cys-1130, and Cys-1132/Cys-1142. Positions Pro-1106 to Asn-1143 constitute an EGF-like 3 domain. In terms of domain architecture, Laminin G-like 6 spans Tyr-1149–Val-1347. Residues Asp-1199 and Val-1216 each coordinate Ca(2+). Residue Asn-1246 is glycosylated (N-linked (GlcNAc...) asparagine). Ca(2+) is bound by residues Ile-1298 and Asn-1300. Residue Ser-1408 is glycosylated (O-linked (Xyl...) (heparan sulfate) serine). The interval Cys-1411 to Ser-1443 is disordered. The chain crosses the membrane as a helical span at residues Gly-1455–Met-1475. Residues Tyr-1476–Val-1530 lie on the Cytoplasmic side of the membrane. Positions Asn-1497–Asn-1523 are interaction with CASK. Residues Asn-1497–Val-1530 are disordered.

Belongs to the neurexin family. As to quaternary structure, interacts (via laminin G-like domain 2 and/or laminin G-like domain 6) with NLGN1 forming a heterotetramer, where one NLGN1 dimer interacts with one NRXN1 dimer. Also interacts (via laminin G-like domain 2 and/or laminin G-like domain 6) with NLGN2, NLGN3 and NLGN4L; interactions with NLGN1, NLGN2, NLGN3 and NLGN4L are calcium-dependent. Interacts (via cytoplasmic C-terminal region) with CASK (via the PDZ, SH3 and guanylate kinase-like domains). Interacts (via cytoplasmic C-terminus) with CASKIN1 and APBA1. Interacts (via laminin G-like domain 2) with NXPH1 and NXPH3. Alpha-type isoforms (neurexin-1-alpha) interact (via laminin G-like domain 2 and/or laminin G-like domain 6) with DAG1 (via alpha-dystroglycan chain). Interacts with LRRTM1, LRRTM2, LRRTM3 and LRRTM4. Interacts with SYT13 and SYTL1. Interacts with CBLN1, CBLN2 and, less avidly, with CBLN4. Interacts with CLSTN3. Alpha-type isoforms interact with alpha-latrotoxin from spider venom. In terms of processing, O-glycosylated; contains heparan sulfate. Heparan sulfate attachment is required for synapse development by mediating interactions with neuroligins and LRRTM2.

It localises to the presynaptic cell membrane. In terms of biological role, cell surface protein involved in cell-cell-interactions, exocytosis of secretory granules and regulation of signal transmission. Function is isoform-specific. Alpha-type isoforms have a long N-terminus with six laminin G-like domains and play an important role in synaptic signal transmission. Alpha-type isoforms play a role in the regulation of calcium channel activity and Ca(2+)-triggered neurotransmitter release at synapses and at neuromuscular junctions. They play an important role in Ca(2+)-triggered exocytosis of secretory granules in pituitary gland. They may affect their functions at synapses and in endocrine cells via their interactions with proteins from the exocytotic machinery. Likewise, alpha-type isoforms play a role in regulating the activity of postsynaptic NMDA receptors, a subtype of glutamate-gated ion channels. Both alpha-type and beta-type isoforms may play a role in the formation or maintenance of synaptic junctions via their interactions (via the extracellular domains) with neuroligin family members, CBLN1 or CBLN2. In vitro, triggers the de novo formation of presynaptic structures. May be involved in specification of excitatory synapses. Alpha-type isoforms were first identified as receptors for alpha-latrotoxin from spider venom. The sequence is that of Neurexin-1 (NRXN1) from Bos taurus (Bovine).